The primary structure comprises 860 residues: DNA mismatch repair protein MutS (860 aa).

Residue 621 to 628 coordinates ATP; it reads GPNMGGKS.

This sequence belongs to the DNA mismatch repair MutS family.

This protein is involved in the repair of mismatches in DNA. It is possible that it carries out the mismatch recognition step. This protein has a weak ATPase activity. This Salmonella arizonae (strain ATCC BAA-731 / CDC346-86 / RSK2980) protein is DNA mismatch repair protein MutS.